We begin with the raw amino-acid sequence, 178 residues long: Mediator of RNA polymerase II transcription subunit 30 (178 aa).

The interval 1 to 22 (MSTPPLAASGMAPGPFAGPQAQ) is disordered. N-acetylserine is present on Ser-2. The segment covering 10-22 (GMAPGPFAGPQAQ) has biased composition (low complexity). 2 coiled-coil regions span residues 70 to 94 (TYQDRLTKLQDNLRQLSVLFRKLRL) and 133 to 173 (RFAS…INAM).

This sequence belongs to the Mediator complex subunit 30 family. In terms of assembly, component of the Mediator complex, which is composed of MED1, MED4, MED6, MED7, MED8, MED9, MED10, MED11, MED12, MED13, MED13L, MED14, MED15, MED16, MED17, MED18, MED19, MED20, MED21, MED22, MED23, MED24, MED25, MED26, MED27, MED29, MED30, MED31, CCNC, CDK8 and CDC2L6/CDK11. The MED12, MED13, CCNC and CDK8 subunits form a distinct module termed the CDK8 module. Mediator containing the CDK8 module is less active than Mediator lacking this module in supporting transcriptional activation. Individual preparations of the Mediator complex lacking one or more distinct subunits have been variously termed ARC, CRSP, DRIP, PC2, SMCC and TRAP. Expressed in brain, heart, kidney, liver, lung, pancreas, placenta and skeletal muscle.

It localises to the nucleus. Component of the Mediator complex, a coactivator involved in the regulated transcription of nearly all RNA polymerase II-dependent genes. Mediator functions as a bridge to convey information from gene-specific regulatory proteins to the basal RNA polymerase II transcription machinery. Mediator is recruited to promoters by direct interactions with regulatory proteins and serves as a scaffold for the assembly of a functional preinitiation complex with RNA polymerase II and the general transcription factors. The polypeptide is Mediator of RNA polymerase II transcription subunit 30 (MED30) (Homo sapiens (Human)).